The chain runs to 854 residues: ATP-dependent zinc metalloprotease FtsH (854 aa).

Residues 1 to 5 (MNRKT) are Cytoplasmic-facing. A helical transmembrane segment spans residues 6 to 26 (VFRNVLLVAVVLLVIYAFSYF). At 27-112 (SNDTRDFKTV…FNTTVTQESW (86 aa)) the chain is on the extracellular side. Residues 113–133 (LTSILLFVLPMIILFGIFFFV) form a helical membrane-spanning segment. Over 134–854 (MNRMQGGGGR…ARWDGPDGSR (721 aa)) the chain is Cytoplasmic. 207–214 (GPPGTGKT) provides a ligand contact to ATP. Zn(2+) is bound at residue H429. The active site involves E430. H433 and D505 together coordinate Zn(2+). Residues 658-854 (AGAPNSGVPN…ARWDGPDGSR (197 aa)) are disordered. Composition is skewed to low complexity over residues 661 to 692 (PNSGVPNGGVPNNGGLPNNGNQGPSNGYAQPS) and 698 to 719 (APQQTPQPGTPDYGAPAGWSAP). The segment covering 720-730 (GWPPRENPSPT) has biased composition (pro residues). The segment covering 749–778 (NQSQGQYGQPQHGQPQPDQGQYGQPHPGQQ) has biased composition (low complexity). Over residues 812–822 (GNPSGENQWQS) the composition is skewed to polar residues. A compositionally biased stretch (pro residues) spans 825–834 (PEQPQTPPPH).

It in the central section; belongs to the AAA ATPase family. This sequence in the C-terminal section; belongs to the peptidase M41 family. In terms of assembly, homohexamer. Zn(2+) is required as a cofactor.

Its subcellular location is the cell membrane. Its function is as follows. Acts as a processive, ATP-dependent zinc metallopeptidase for both cytoplasmic and membrane proteins. Plays a role in the quality control of integral membrane proteins. The polypeptide is ATP-dependent zinc metalloprotease FtsH (Rhodococcus erythropolis (strain PR4 / NBRC 100887)).